The following is a 208-amino-acid chain: 3-demethoxyubiquinol 3-hydroxylase (208 aa).

6 residues coordinate Fe cation: Glu-57, Glu-87, His-90, Glu-139, Glu-171, and His-174.

This sequence belongs to the COQ7 family. The cofactor is Fe cation.

It localises to the cell membrane. It catalyses the reaction a 5-methoxy-2-methyl-3-(all-trans-polyprenyl)benzene-1,4-diol + AH2 + O2 = a 3-demethylubiquinol + A + H2O. It functions in the pathway cofactor biosynthesis; ubiquinone biosynthesis. Functionally, catalyzes the hydroxylation of 2-nonaprenyl-3-methyl-6-methoxy-1,4-benzoquinol during ubiquinone biosynthesis. The chain is 3-demethoxyubiquinol 3-hydroxylase from Burkholderia cenocepacia (strain HI2424).